Reading from the N-terminus, the 283-residue chain is Formamidopyrimidine-DNA glycosylase (283 aa).

The active-site Schiff-base intermediate with DNA is Pro2. Glu3 (proton donor) is an active-site residue. Lys60 serves as the catalytic Proton donor; for beta-elimination activity. 3 residues coordinate DNA: His100, Arg119, and Arg164. Residues 249–283 (WVYGRENKPCRKCGVKILKAKVAGRGTHWCPNCQK) form an FPG-type zinc finger. The Proton donor; for delta-elimination activity role is filled by Arg273.

The protein belongs to the FPG family. Monomer. Requires Zn(2+) as cofactor.

The catalysed reaction is Hydrolysis of DNA containing ring-opened 7-methylguanine residues, releasing 2,6-diamino-4-hydroxy-5-(N-methyl)formamidopyrimidine.. It carries out the reaction 2'-deoxyribonucleotide-(2'-deoxyribose 5'-phosphate)-2'-deoxyribonucleotide-DNA = a 3'-end 2'-deoxyribonucleotide-(2,3-dehydro-2,3-deoxyribose 5'-phosphate)-DNA + a 5'-end 5'-phospho-2'-deoxyribonucleoside-DNA + H(+). Its function is as follows. Involved in base excision repair of DNA damaged by oxidation or by mutagenic agents. Acts as a DNA glycosylase that recognizes and removes damaged bases. Has a preference for oxidized purines, such as 7,8-dihydro-8-oxoguanine (8-oxoG). Has AP (apurinic/apyrimidinic) lyase activity and introduces nicks in the DNA strand. Cleaves the DNA backbone by beta-delta elimination to generate a single-strand break at the site of the removed base with both 3'- and 5'-phosphates. In Prochlorococcus marinus (strain SARG / CCMP1375 / SS120), this protein is Formamidopyrimidine-DNA glycosylase.